Reading from the N-terminus, the 240-residue chain is MAAAAPSRVSVRAAAPGQTGGFAKIRPQVVVAAAARSAGVSGRRARSVRASLFSPKPATPKDARPAKVQEMFVYEINERDRESPAYLRLSAKQTENALGDLVPFTNKLYSGSLDKRLGISAGICILIQHVPERNGDRYEAIYSFYFGDYGHISVQGPYLTYEESYLAVTGGSGVFEGAYGQVKLNQIVFPFKIFYTFYLKGIPDLPRELLCTPVPPSPTVEPTPAAKATEPHACLNNFTN.

The transit peptide at 1 to 49 directs the protein to the chloroplast; the sequence is MAAAAPSRVSVRAAAPGQTGGFAKIRPQVVVAAAARSAGVSGRRARSVR.

It belongs to the allene oxide cyclase family.

It localises to the plastid. The protein resides in the chloroplast. The enzyme catalyses (9Z,13S,15Z)-12,13-epoxyoctadeca-9,11,15-trienoate = (9S,13S,15Z)-12-oxophyto-10,15-dienoate. It functions in the pathway lipid metabolism; polyunsaturated fatty acid biosynthesis. Its function is as follows. Involved in the production of 12-oxo-phytodienoic acid (OPDA), a precursor of jasmonic acid (JA). Required for the production of JA in response to wounding. Necessary for flower and coleoptile development regulation by light, including blue (BL), red (RL) and far red (FR) lights. Involved in the auxin-mediated signaling pathway leading to growth stimulation. Essential for photodestruction of phyA upon activation by RL and FR. Implicated in responses to salt stress (NaCl). Confers resistance to incompatible strains of the blast fungus Magnaporthe grisea, jasmonic acid (JA) thus playing a significant role in the resistance to fungal infection. Implicated in riboflavin-induced resistance to the sheath blight Rhizoctonia solani. Required for Pseudomonas fluorescens-mediated JA-dependent induced systemic resistance (ISR). Confers some resistance, independently of the JA pathway but probably via OPDA accumulation, to brown planthopper (BPH, Nilaparvata lugens), a destructive, monophagous, piercing-sucking insect, mainly by reducing its feeding activity and survival rate. Triggers resistance to the chewing insect striped stem borer (SSB) Chilo suppressalis, to the root hemiparasite witchweed Striga hermonthica, and to the root feeder insect rice water weevil Lissorhoptrus oryzophilus, in a JA-dependent manner, by attenuating both the growth mass and growth rate of caterpillars. This is Allene oxide cyclase, chloroplastic from Oryza sativa subsp. indica (Rice).